The sequence spans 297 residues: Nucleotide-binding protein DSY4845 (297 aa).

13-20 is a binding site for ATP; that stretch reads GLSGAGKT. A GTP-binding site is contributed by 64–67; it reads DLRG.

This sequence belongs to the RapZ-like family.

In terms of biological role, displays ATPase and GTPase activities. The protein is Nucleotide-binding protein DSY4845 of Desulfitobacterium hafniense (strain Y51).